A 221-amino-acid chain; its full sequence is Ependymin-1 (221 aa).

Residues 1–21 (MQAFAVAALSIWLCLGATTLA) form the signal peptide. Asparagine 33, asparagine 73, and asparagine 97 each carry an N-linked (GlcNAc...) asparagine glycan.

The protein belongs to the ependymin family. Binds calcium through the terminal sialic acids. As to expression, EPDs are synthesized in the meninx and secreted in the cerebrospinal fluid.

It is found in the secreted. Functionally, may play a role in neural plasticity. May be involved during axon regeneration. This Oncorhynchus mykiss (Rainbow trout) protein is Ependymin-1 (epd1).